A 101-amino-acid chain; its full sequence is A-type ATP synthase subunit K (101 aa).

A run of 3 helical transmembrane segments spans residues 5–25, 37–57, and 75–95; these read WLPF…AQAP, IGAG…VGMA, and ILIF…FAVL.

This sequence belongs to the V-ATPase proteolipid subunit family. In terms of assembly, has multiple subunits with at least A(3), B(3), C, D, E, F, H, I and proteolipid K(x). Post-translationally, the N-terminus is blocked.

Its subcellular location is the cell membrane. Its function is as follows. Component of the A-type ATP synthase that produces ATP from ADP in the presence of a proton gradient across the membrane. The chain is A-type ATP synthase subunit K from Sulfurisphaera tokodaii (strain DSM 16993 / JCM 10545 / NBRC 100140 / 7) (Sulfolobus tokodaii).